Reading from the N-terminus, the 554-residue chain is CTP synthase (554 aa).

Residues 1 to 265 (MTPLIFVTGG…DEIVIDQFKL (265 aa)) form an amidoligase domain region. Serine 13 is a binding site for CTP. Serine 13 contributes to the UTP binding site. Residues 14 to 19 (SLGKGI) and aspartate 71 contribute to the ATP site. Residues aspartate 71 and glutamate 139 each contribute to the Mg(2+) site. CTP is bound by residues 146-148 (DIE), 186-191 (KTKPTQ), and lysine 222. UTP is bound by residues 186-191 (KTKPTQ) and lysine 222. The Glutamine amidotransferase type-1 domain occupies 292-545 (TIAVVGKYVD…VKASRARKAG (254 aa)). An L-glutamine-binding site is contributed by glycine 353. The active-site Nucleophile; for glutamine hydrolysis is cysteine 380. Residues 381 to 384 (YGMQ), glutamate 404, and arginine 471 each bind L-glutamine. Catalysis depends on residues histidine 518 and glutamate 520.

Belongs to the CTP synthase family. In terms of assembly, homotetramer.

The enzyme catalyses UTP + L-glutamine + ATP + H2O = CTP + L-glutamate + ADP + phosphate + 2 H(+). It catalyses the reaction L-glutamine + H2O = L-glutamate + NH4(+). It carries out the reaction UTP + NH4(+) + ATP = CTP + ADP + phosphate + 2 H(+). It functions in the pathway pyrimidine metabolism; CTP biosynthesis via de novo pathway; CTP from UDP: step 2/2. With respect to regulation, allosterically activated by GTP, when glutamine is the substrate; GTP has no effect on the reaction when ammonia is the substrate. The allosteric effector GTP functions by stabilizing the protein conformation that binds the tetrahedral intermediate(s) formed during glutamine hydrolysis. Inhibited by the product CTP, via allosteric rather than competitive inhibition. In terms of biological role, catalyzes the ATP-dependent amination of UTP to CTP with either L-glutamine or ammonia as the source of nitrogen. Regulates intracellular CTP levels through interactions with the four ribonucleotide triphosphates. The polypeptide is CTP synthase (Xylella fastidiosa (strain M12)).